We begin with the raw amino-acid sequence, 187 residues long: Calmodulin-like protein 1 (187 aa).

N-acetylalanine is present on Ala-2. EF-hand domains lie at 8 to 43 (EQIV…LGQN), 44 to 79 (PTEA…KLRD), 81 to 116 (DSEE…IGER), and 117 to 152 (LTDE…KKRR). The Ca(2+) site is built by Asp-21, Asp-23, Asp-25, Ser-27, Glu-32, Asp-57, Asp-59, Asn-61, Asn-63, Glu-68, Asp-94, Asp-96, Asn-98, Glu-105, Asp-130, Asp-132, Asp-134, Gln-136, and Glu-141. Positions 153–187 (KRIEEKREHDGGSRTKSAGPSAAPASKRGQKCVIL) are disordered. Basic and acidic residues predominate over residues 154–165 (RIEEKREHDGGS). The segment covering 169–178 (SAGPSAAPAS) has biased composition (low complexity). Cysteine methyl ester is present on Cys-184. Cys-184 is lipidated: S-farnesyl cysteine. Residues 185–187 (VIL) constitute a propeptide, removed in mature form.

The protein belongs to the calmodulin family. As to expression, expressed in roots, etiolated shoots and flowers.

It is found in the membrane. Functionally, calcium-binding protein that binds and activates CAMK1, a calcium/calmodulin-dependent kinase. In Oryza sativa subsp. indica (Rice), this protein is Calmodulin-like protein 1 (CML1).